A 1161-amino-acid chain; its full sequence is MPVRRGHVAPQNTFLDTIIRKFEGQSRKFIIANARVENCAVIYCNDGFCELCGYSRAEVMQRPCTCDFLHGPRTQRRAAAQIAQALLGAEERKVEIAFYRKDGSCFLCLVDVVPVKNEDGAVIMFILNFEVVMEKDMVGSPARDTNHRGPPTSWLAPGRAKTFRLKLPALLALTARESSVRPGGAGGAGAPGAVVVDVDLTPAAPSSESLALDEVPAMDNHVAGLGPAEERRALVGSCSPPPPVSAPGPHPSLRAHSLNPDASGSSCSLARTRSRESCASVRRASSADDIEAMRAGALPPPPRHASTGAMHPLRSGLLNSTSDSDLVRYRTISKIPQITLNFVDLKGDPFLASPTSDREIIAPKIKERTHNVTEKVTQVLSLGADVLPEYKLQAPRIHRWTILHYSPFKAVWDWLILLLVIYTAVFTPYSAAFLLKETEEGPPAPECGYACQPLAVVDLIVDIMFIVDILINFRTTYVNANEEVVSHPGRIAVHYFKGWFLIDMVAAIPFDLLIFGSGSEELIGLLKTARLLRLVRVARKLDRYSEYGAAVLLLLMCTFALIAHWLACIWYAIGNMEQPHMDSRIGWLHNLGDQMGKPYNSSGLGGPSIKDKYVTGLYFTFSSLTSVGFGNVSPNTNSEKIFSICVMLIGSLMYASIFGNVSAIIQRLYSGTARYHTQMLRVREFIRFHQIPNPLRQRLEEYFQHAWSYTNGIDMNAVLKGFPECLQADICLHLNRSLLQHCKPFRGATKDCLRALAMKFKTTHAPPGDTLVHAGDLLTALYFISRGSIEILRGDVVVAILGKNDIFGEPLNLYARPGKSNGDVRALTYCDLHKIHRDDLLEVLDMYPEFSDHFWSSLEITFNLRDTNMIPGSPGSTEWEGGFNRQRKRKLSFRRRTDKDTEQPGEVSALGPGRAGAGPSSRGRPGGPWGESPSSGPSSPESSEDEGPGRSSSPLRLVPFSSPRPPGEPPGGEPLTEDCEKSSDTCNPLSGAFSGVSNIFSFWGDSRGRQYQELPRCPAPAPSLLNIPLSSPSRRPRGDVESRLDALQRQLNRLETRLSADMATVLQLLQRQMTLVPPAYSAVTTPGPGPTSTSPLLPVSPFPTLTLDSLSQVSQFMACEELPPGAPELPQEGPTRRLSLPGQLGALTSQPLHRHGSDPGS.

Residues 1 to 405 (MPVRRGHVAP…RIHRWTILHY (405 aa)) lie on the Cytoplasmic side of the membrane. Positions 17–88 (TIIRKFEGQS…AAQIAQALLG (72 aa)) constitute a PAS domain. The region spanning 92–144 (RKVEIAFYRKDGSCFLCLVDVVPVKNEDGAVIMFILNFEVVMEKDMVGSPARD) is the PAC domain. The segment at 233–286 (ALVGSCSPPPPVSAPGPHPSLRAHSLNPDASGSSCSLARTRSRESCASVRRASS) is disordered. A phosphoserine mark is found at Ser-239 and Ser-245. The span at 239-250 (SPPPPVSAPGPH) shows a compositional bias: pro residues. Polar residues predominate over residues 260-271 (PDASGSSCSLAR). Phosphoserine is present on residues Ser-285, Ser-286, Ser-322, and Ser-353. The helical transmembrane segment at 406 to 426 (SPFKAVWDWLILLLVIYTAVF) threads the bilayer. Over 427 to 452 (TPYSAAFLLKETEEGPPAPECGYACQ) the chain is Extracellular. Residues 453–473 (PLAVVDLIVDIMFIVDILINF) form a helical membrane-spanning segment. At 474–497 (RTTYVNANEEVVSHPGRIAVHYFK) the chain is on the cytoplasmic side. Residues 498–518 (GWFLIDMVAAIPFDLLIFGSG) traverse the membrane as a helical segment. Residues 519 to 522 (SEEL) are Extracellular-facing. A helical; Voltage-sensor membrane pass occupies residues 523 to 543 (IGLLKTARLLRLVRVARKLDR). Over 544–549 (YSEYGA) the chain is Cytoplasmic. A helical transmembrane segment spans residues 550–570 (AVLLLLMCTFALIAHWLACIW). Residues 571 to 613 (YAIGNMEQPHMDSRIGWLHNLGDQMGKPYNSSGLGGPSIKDKY) lie on the Extracellular side of the membrane. The N-linked (GlcNAc...) asparagine glycan is linked to Asn-600. The segment at residues 614 to 634 (VTGLYFTFSSLTSVGFGNVSP) is an intramembrane region (pore-forming). The Selectivity filter signature appears at 626–631 (SVGFGN). Residues 635–640 (NTNSEK) lie on the Extracellular side of the membrane. A helical transmembrane segment spans residues 641 to 661 (IFSICVMLIGSLMYASIFGNV). The Cytoplasmic segment spans residues 662-1161 (SAIIQRLYSG…LHRHGSDPGS (500 aa)). Residues 744-844 (PFRGATKDCL…IHRDDLLEVL (101 aa)) are cNMP-binding domain. Residues 872–985 (GSPGSTEWEG…TEDCEKSSDT (114 aa)) form a disordered region. A phosphoserine mark is found at Ser-873 and Ser-876. Residues 885-894 (RQRKRKLSFR) are compositionally biased toward basic residues. Over residues 930-941 (GESPSSGPSSPE) the composition is skewed to low complexity. Residues 962 to 972 (SPRPPGEPPGG) show a composition bias toward pro residues. An Omega-N-methylarginine modification is found at Arg-1016. The stretch at 1037-1064 (RGDVESRLDALQRQLNRLETRLSADMAT) forms a coiled coil. Residues 1121-1161 (ELPPGAPELPQEGPTRRLSLPGQLGALTSQPLHRHGSDPGS) form a disordered region. Ser-1139 is subject to Phosphoserine.

Belongs to the potassium channel family. H (Eag) (TC 1.A.1.20) subfamily. Kv11.1/KCNH2 sub-subfamily. The potassium channel is probably composed of a homo- or heterotetrameric complex of pore-forming alpha subunits that can associate with modulating beta subunits. Interacts with DNAJB12 and DNAJB14; chaperones DNAJB12 and DNAJB14 promote tetramerization. Heteromultimer with KCNH6/ERG2 and KCNH7/ERG3. Interacts with ALG10B. Forms a stable complex with KCNE1 or KCNE2, and that this heteromultimerization regulates Inward rectifier potassium channel activity. Interacts with CANX. The core-glycosylated, but not the fully glycosylated form interacts with RNF207. Interacts with NDFIP1 and NDFIP2; this interaction decreases the cell membrane expression by targeting KCNH2, through interaction with NEDD4L, for the degradation through the multivesicular bodies (MVBs)-lysosomal pathway. Phosphorylated on serine and threonine residues. Phosphorylation by PKA inhibits ion conduction. In terms of tissue distribution, detected in heart, both in atrium and in left ventricle.

The protein localises to the cell membrane. The catalysed reaction is K(+)(in) = K(+)(out). In terms of biological role, pore-forming (alpha) subunit of voltage-gated inwardly rectifying potassium channel. Characterized by unusual gating kinetics by producing relatively small outward currents during membrane depolarization and large inward currents during subsequent repolarization which reflect a rapid inactivation during depolarization and quick recovery from inactivation but slow deactivation (closing) during repolarization. Channel properties are modulated by cAMP and subunit assembly. Forms a stable complex with KCNE1 or KCNE2, and that this heteromultimerization regulates inward rectifier potassium channel activity. The protein is Voltage-gated inwardly rectifying potassium channel KCNH2 of Oryctolagus cuniculus (Rabbit).